A 1349-amino-acid chain; its full sequence is Patatin-like phospholipase domain-containing protein 7 (1349 aa).

The Lumenal portion of the chain corresponds to 1–36 (MQKEEDVCPEAGYCLGTALSSWGLHFMEEHSQSTML). A helical membrane pass occupies residues 37–57 (MGIGIGVLLTLAFVGLAAFFV). Over 58 to 1349 (YRKVSRFRRA…DQGPRLYRPS (1292 aa)) the chain is Cytoplasmic. Residue 170 to 297 (VLGHFEKPLF…VRVVQIIMVR (128 aa)) participates in a nucleoside 3',5'-cyclic phosphate binding. The interval 340-361 (MSYGPEEQLERSPRLSEFNSSD) is disordered. S341 and S377 each carry phosphoserine. Residues 496 to 599 (FLHV…VVRR) and 610 to 715 (ALDW…LGEK) each bind a nucleoside 3',5'-cyclic phosphate. Positions 678-964 (VHAVRDSELA…RGCAQVGILR (287 aa)) are involved in the binding to lipid droplets. Positions 947-1113 (LVLGGGGARG…INNLPADVAR (167 aa)) constitute a PNPLA domain. The GXGXXG signature appears at 951-956 (GGGARG). The GXSXG motif lies at 978 to 982 (GTSIG). S980 acts as the Nucleophile in catalysis. The active-site Proton acceptor is D1100. The DGA/G signature appears at 1100 to 1102 (DGG). S1277 carries the phosphoserine modification. T1281 bears the Phosphothreonine mark. Residues 1297–1349 (DFQSTGIELDSDSECEPSMSQGPHSLTSPKQSQDSFPWLPNQDDQGPRLYRPS) are disordered. Over residues 1314–1331 (SMSQGPHSLTSPKQSQDS) the composition is skewed to polar residues.

Belongs to the NTE family. As to expression, expressed in the brain, liver, kidney, lung and testis.

It is found in the endoplasmic reticulum membrane. The protein resides in the lipid droplet. The enzyme catalyses a 1-acyl-sn-glycero-3-phosphocholine + H2O = sn-glycerol 3-phosphocholine + a fatty acid + H(+). It catalyses the reaction 1-(9Z-octadecenoyl)-sn-glycero-3-phosphocholine + H2O = sn-glycerol 3-phosphocholine + (9Z)-octadecenoate + H(+). The catalysed reaction is 1-(9Z-octadecenoyl)-sn-glycero-3-phosphoethanolamine + H2O = sn-glycero-3-phosphoethanolamine + (9Z)-octadecenoate + H(+). It carries out the reaction 1-(9Z-octadecenoyl)-sn-glycero-3-phospho-L-serine + H2O = sn-glycero-3-phospho-L-serine + (9Z)-octadecenoate + H(+). The enzyme catalyses 1-hexadecanoyl-sn-glycero-3-phosphocholine + H2O = sn-glycerol 3-phosphocholine + hexadecanoate + H(+). It catalyses the reaction 1-hexadecanoyl-sn-glycero-3-phosphate + H2O = sn-glycerol 3-phosphate + hexadecanoate + H(+). Lysophospholipase which preferentially deacylates unsaturated lysophosphatidylcholine (C18:1), generating glycerophosphocholine. Also can deacylate, to a lesser extent, lysophosphatidylethanolamine (C18:1), lysophosphatidyl-L-serine (C18:1) and lysophosphatidic acid (C16:0). In Rattus norvegicus (Rat), this protein is Patatin-like phospholipase domain-containing protein 7 (Pnpla7).